Here is a 351-residue protein sequence, read N- to C-terminus: DNA polymerase IV (351 aa).

The 182-residue stretch at 4–185 (IIHVDMDCFF…LPLGKIPGVG (182 aa)) folds into the UmuC domain. Aspartate 8 and aspartate 103 together coordinate Mg(2+). The active site involves glutamate 104.

The protein belongs to the DNA polymerase type-Y family. As to quaternary structure, monomer. The cofactor is Mg(2+).

It localises to the cytoplasm. It carries out the reaction DNA(n) + a 2'-deoxyribonucleoside 5'-triphosphate = DNA(n+1) + diphosphate. Functionally, poorly processive, error-prone DNA polymerase involved in untargeted mutagenesis. Copies undamaged DNA at stalled replication forks, which arise in vivo from mismatched or misaligned primer ends. These misaligned primers can be extended by PolIV. Exhibits no 3'-5' exonuclease (proofreading) activity. May be involved in translesional synthesis, in conjunction with the beta clamp from PolIII. The chain is DNA polymerase IV from Cronobacter sakazakii (strain ATCC BAA-894) (Enterobacter sakazakii).